A 126-amino-acid polypeptide reads, in one-letter code: MSDTQHQVNVRVDTRYLPEQSAPEQNRFAFAYTVTIENRGEVSAQLLSRHWIITDGDGRTQEVRGAGVVGEQPLIAPGAQHTYTSGTVLATRVGSMRGSYQMLGSDGVAFDAAIPVFRLAVPGALH.

Positions 2–126 constitute an ApaG domain; the sequence is SDTQHQVNVR…FRLAVPGALH (125 aa).

This chain is Protein ApaG, found in Pseudomonas paraeruginosa (strain DSM 24068 / PA7) (Pseudomonas aeruginosa (strain PA7)).